The chain runs to 226 residues: Lipid phosphate phosphatase gamma (226 aa).

An N-acetylmethionine modification is found at Met-1. 5 helical membrane-spanning segments follow: residues 24–44 (LGHFLAWISLVPVFISLGGFV), 52–72 (ELQGIFFGIGLVISQFINEFI), 102–122 (FMFFFATYFSLMGCKGIGFWF), 128–148 (WIMNLLHWSLAVVTMYSRVYL), and 152–174 (TVAQVFAGAALGGIVGASWFWVV).

The protein belongs to the PA-phosphatase related phosphoesterase family. Expressed in root tips, root branch points, vascular tissue of cotyledons and leaves, pistil, anthers and filaments.

The protein localises to the plastid. Its subcellular location is the chloroplast inner membrane. With respect to regulation, inhibited by Mg(2+). Functionally, exhibits phosphatidate phosphatase (PAP) activity in vitro. May play a primary role as PAP in plastids. The protein is Lipid phosphate phosphatase gamma (LPPG) of Arabidopsis thaliana (Mouse-ear cress).